A 390-amino-acid polypeptide reads, in one-letter code: GTPase Obg (390 aa).

Positions 1–159 constitute an Obg domain; sequence MKFVDEATIL…RELTLELLLL (159 aa). Residues 128-147 form a disordered region; the sequence is SRFKSSVNRAPRQKTNGTKG. Residues 129 to 145 show a composition bias toward polar residues; that stretch reads RFKSSVNRAPRQKTNGT. One can recognise an OBG-type G domain in the interval 160–333; the sequence is ADVGMLGLPN…LCWDVMNFLK (174 aa). Residues 166–173, 191–195, 213–216, 283–286, and 314–316 contribute to the GTP site; these read GLPNAGKS, FTTLV, DIPG, NKVD, and SAA. Mg(2+) contacts are provided by S173 and T193.

This sequence belongs to the TRAFAC class OBG-HflX-like GTPase superfamily. OBG GTPase family. Monomer. Mg(2+) is required as a cofactor.

The protein localises to the cytoplasm. In terms of biological role, an essential GTPase which binds GTP, GDP and possibly (p)ppGpp with moderate affinity, with high nucleotide exchange rates and a fairly low GTP hydrolysis rate. Plays a role in control of the cell cycle, stress response, ribosome biogenesis and in those bacteria that undergo differentiation, in morphogenesis control. The polypeptide is GTPase Obg (Pectobacterium atrosepticum (strain SCRI 1043 / ATCC BAA-672) (Erwinia carotovora subsp. atroseptica)).